Reading from the N-terminus, the 109-residue chain is Small ribosomal subunit protein bS6 (109 aa).

This sequence belongs to the bacterial ribosomal protein bS6 family.

Its function is as follows. Binds together with bS18 to 16S ribosomal RNA. The protein is Small ribosomal subunit protein bS6 of Dehalococcoides mccartyi (strain CBDB1).